A 122-amino-acid polypeptide reads, in one-letter code: Large ribosomal subunit protein uL14 (122 aa).

This sequence belongs to the universal ribosomal protein uL14 family. In terms of assembly, part of the 50S ribosomal subunit. Forms a cluster with proteins L3 and L19. In the 70S ribosome, L14 and L19 interact and together make contacts with the 16S rRNA in bridges B5 and B8.

Functionally, binds to 23S rRNA. Forms part of two intersubunit bridges in the 70S ribosome. This Oenococcus oeni (strain ATCC BAA-331 / PSU-1) protein is Large ribosomal subunit protein uL14.